The sequence spans 119 residues: Chorion class B protein M2807 (119 aa).

Residues 1–11 (GGLGGGCGRGF) form a left arm region. Positions 12 to 80 (SGGGLPVATA…GNGAVGITRE (69 aa)) are central domain. The segment at 81–119 (GGLGYGAGYGDGYGLGYGGYGGGYGLGYGGYGGCGCGCG) is right arm (Gly-rich tandem repeats).

It belongs to the chorion protein family.

This protein is one of many from the eggshell of the silk moth. The polypeptide is Chorion class B protein M2807 (Bombyx mori (Silk moth)).